Here is a 342-residue protein sequence, read N- to C-terminus: MMILGKAGILAQYGTIYVRQNTIRNNLSSCIFKQSLCAFHSLAKVLQQKQVPLDLSYDIIKRDAVKTGDEGKPRPPIIILHGLFGNKLNNRSIGRNLNKKLGRDVYLLDLRNHGSSPHSSVHNYEVMSEDVKHFITKHELNTNGGPIIIGHSMGGKVAMMLVLKNPQLCSMLVCIENAPVSLRPNAEFVEYIKALMEIVNDKGKTIRTLKQADEHLAERIGGNELVRRFLLTALKKVKMDNSSSVSSYTFEERIPLATLKDAIVKGEIAAWPLDPARERWTRPALFIRATQSHYVVDEYLPIIGAFFPRFETRDIDAGHWVNAEKPGECAESIVDFVERHED.

Residues 1–38 (MMILGKAGILAQYGTIYVRQNTIRNNLSSCIFKQSLCA) constitute a mitochondrion transit peptide. A propeptide spans 39 to 46 (FHSLAKVL) (removed in mature form). The 252-residue stretch at 75 to 326 (PPIIILHGLF…AGHWVNAEKP (252 aa)) folds into the AB hydrolase-1 domain. Catalysis depends on charge relay system residues Ser-152 and His-319.

It belongs to the AB hydrolase superfamily. In terms of processing, processed by both the mitochondrial processing peptidase (MPP) and the mitochondrial octapeptidyl aminopeptidase (OCT1).

It is found in the mitochondrion. Probable alcohol acetyltransferase that uses acetyl-CoA to synthesize acetate esters from various alcohols. Not involved in the synthesis of ethyl acetate. The chain is Probable alcohol acetyltransferase (IMO32) from Saccharomyces cerevisiae (strain ATCC 204508 / S288c) (Baker's yeast).